A 98-amino-acid polypeptide reads, in one-letter code: Cystatin-B (98 aa).

The residue at position 1 (M1) is an N-acetylmethionine. The Secondary area of contact signature appears at 46–50; sequence QVVAG.

It belongs to the cystatin family.

It is found in the cytoplasm. Functionally, this is an intracellular thiol proteinase inhibitor. In Sus scrofa (Pig), this protein is Cystatin-B (CSTB).